Consider the following 239-residue polypeptide: Phosphoribosylaminoimidazole-succinocarboxamide synthase (239 aa).

This sequence belongs to the SAICAR synthetase family.

The enzyme catalyses 5-amino-1-(5-phospho-D-ribosyl)imidazole-4-carboxylate + L-aspartate + ATP = (2S)-2-[5-amino-1-(5-phospho-beta-D-ribosyl)imidazole-4-carboxamido]succinate + ADP + phosphate + 2 H(+). Its pathway is purine metabolism; IMP biosynthesis via de novo pathway; 5-amino-1-(5-phospho-D-ribosyl)imidazole-4-carboxamide from 5-amino-1-(5-phospho-D-ribosyl)imidazole-4-carboxylate: step 1/2. In Chlorobium luteolum (strain DSM 273 / BCRC 81028 / 2530) (Pelodictyon luteolum), this protein is Phosphoribosylaminoimidazole-succinocarboxamide synthase.